We begin with the raw amino-acid sequence, 356 residues long: Alpha-N-acetylneuraminide alpha-2,8-sialyltransferase (356 aa).

Over 1–29 the chain is Cytoplasmic; it reads MSPCGRARRQTSRGAMAVLAWKFPRTRLP. A helical; Signal-anchor for type II membrane protein membrane pass occupies residues 30–48; the sequence is MGASALCVVVLCWLYIFPV. Residues 49–356 are Lumenal-facing; it reads YRLPNEKEIV…CEDTSLQPTS (308 aa). 2 N-linked (GlcNAc...) asparagine glycosylation sites follow: asparagine 71 and asparagine 119. 2 disulfide bridges follow: cysteine 138–cysteine 287 and cysteine 152–cysteine 347. CMP-N-acetyl-beta-neuraminate is bound by residues asparagine 143 and asparagine 166. N-linked (GlcNAc...) asparagine glycosylation is found at asparagine 214 and asparagine 245. CMP-N-acetyl-beta-neuraminate is bound by residues serine 274, threonine 275, glycine 276, tryptophan 296, and histidine 310. The active-site Proton donor/acceptor is histidine 322.

The protein belongs to the glycosyltransferase 29 family.

Its subcellular location is the golgi apparatus membrane. It carries out the reaction an N-acetyl-alpha-neuraminyl-(2-&gt;3)-beta-D-galactosyl derivative + CMP-N-acetyl-beta-neuraminate = an N-acetyl-alpha-neuraminyl-(2-&gt;8)-N-acetyl-alpha-neuraminyl-(2-&gt;3)-beta-D-galactosyl derivative + CMP + H(+). The enzyme catalyses a ganglioside GM3 (d18:1(4E)) + CMP-N-acetyl-beta-neuraminate = a ganglioside GD3 (d18:1(4E)) + CMP + H(+). The catalysed reaction is a ganglioside GD3 (d18:1(4E)) + CMP-N-acetyl-beta-neuraminate = a ganglioside GT3 (d18:1(4E)) + CMP + H(+). It catalyses the reaction a ganglioside GD1a (d18:1(4E)) + CMP-N-acetyl-beta-neuraminate = a ganglioside GT1a (d18:1(4E)) + CMP + H(+). It carries out the reaction a ganglioside GT1b (d18:1(4E)) + CMP-N-acetyl-beta-neuraminate = a ganglioside GQ1b (d18:1(4E)) + CMP + H(+). The enzyme catalyses a ganglioside GM1b (d18:1(4E)) + CMP-N-acetyl-beta-neuraminate = a ganglioside GD1c (d18:1(4E)) + CMP + H(+). The catalysed reaction is a ganglioside GD3 + CMP-N-acetyl-beta-neuraminate = a ganglioside GT3 + CMP + H(+). It catalyses the reaction [alpha-N-acetylneuraminyl-(2-&gt;8)](n)-alpha-N-acetylneuraminyl-(2-&gt;8)-alpha-N-acetylneuraminyl-(2-&gt;3)-beta-D-galactosyl-(1-&gt;4)-beta-D-glucosyl-(1&lt;-&gt;1)-ceramide + CMP-N-acetyl-beta-neuraminate = [alpha-N-acetylneuraminyl-(2-&gt;8)](n+1)-alpha-N-acetylneuraminyl-(2-&gt;8)-alpha-N-acetylneuraminyl-(2-&gt;3)-beta-D-galactosyl-(1-&gt;4)-beta-D-glucosyl-(1&lt;-&gt;1)-ceramide + CMP + H(+). Its pathway is protein modification; protein glycosylation. It functions in the pathway lipid metabolism; sphingolipid metabolism. In terms of biological role, catalyzes the addition of sialic acid in alpha 2,8-linkage to the sialic acid moiety of the ganglioside GM3 to form ganglioside GD3; gangliosides are a subfamily of complex glycosphingolipds that contain one or more residues of sialic acid. Can catalyze the addition of a second alpha-2,8- sialic acid to GD3 to form GT3. Can use GM1b, GD1a and GT1b as acceptor substrates to synthesize GD1c, GT1a and GQ1b respectively. The protein is Alpha-N-acetylneuraminide alpha-2,8-sialyltransferase of Pan troglodytes (Chimpanzee).